Consider the following 210-residue polypeptide: Large ribosomal subunit protein uL3 (210 aa).

The disordered stretch occupies residues Gly119–Arg143.

The protein belongs to the universal ribosomal protein uL3 family. Part of the 50S ribosomal subunit. Forms a cluster with proteins L14 and L19.

Its function is as follows. One of the primary rRNA binding proteins, it binds directly near the 3'-end of the 23S rRNA, where it nucleates assembly of the 50S subunit. This chain is Large ribosomal subunit protein uL3, found in Lacticaseibacillus casei (strain BL23) (Lactobacillus casei).